Consider the following 402-residue polypeptide: Acetylornithine aminotransferase (402 aa).

Pyridoxal 5'-phosphate-binding positions include 106–107 (GA) and phenylalanine 132. Arginine 135 is a binding site for N(2)-acetyl-L-ornithine. 217-220 (DEVQ) is a binding site for pyridoxal 5'-phosphate. Lysine 247 is modified (N6-(pyridoxal phosphate)lysine). Threonine 275 contacts N(2)-acetyl-L-ornithine. Residue threonine 276 coordinates pyridoxal 5'-phosphate.

The protein belongs to the class-III pyridoxal-phosphate-dependent aminotransferase family. ArgD subfamily. In terms of assembly, homodimer. Pyridoxal 5'-phosphate is required as a cofactor.

Its subcellular location is the cytoplasm. The catalysed reaction is N(2)-acetyl-L-ornithine + 2-oxoglutarate = N-acetyl-L-glutamate 5-semialdehyde + L-glutamate. It functions in the pathway amino-acid biosynthesis; L-arginine biosynthesis; N(2)-acetyl-L-ornithine from L-glutamate: step 4/4. The protein is Acetylornithine aminotransferase of Streptomyces coelicolor (strain ATCC BAA-471 / A3(2) / M145).